We begin with the raw amino-acid sequence, 37 residues long: Large ribosomal subunit protein bL36c (37 aa).

This sequence belongs to the bacterial ribosomal protein bL36 family.

It localises to the plastid. It is found in the chloroplast. This chain is Large ribosomal subunit protein bL36c (rpl36), found in Nephroselmis olivacea (Green alga).